The primary structure comprises 855 residues: MATRYDPQSAEPRWRDAWEKADIFRTKAPKDAPGAPKAFVLEMFPYPSGRLHMGHVRNYAMGDVVARHKRAKGYNVLHPMGWDAFGMPAENAAMERKVHPGKWTYANIESMKAQFRKLGLSLDWSREFATCDPDYYGAQQALFLKLMDKGLVYRKASKVNWDPVDNTVLANEQVIDGRGWRSGAPVEQRELTQWFFKITAYADDLLEAVQKLERWPEKVRTMQANWIGRSEGLEMTFAFDGERPAGFEDGISVFTTRPDTLFGASFVALSPDHPLTLQLAEKSDALQAFRAKCAQIGTSEEAIEKAEKLGFDTGLTVAHPFEPGRTVPVWVANFVLMGYGTGAIFGCPAHDQRDLDFARKFGLDVFPVVLPPGADAAAFEVGIEAYTGPGHIYKSGFLDGLSIDDAKRAAIAKIEAAGQGEGKVNYRLRDWGVSRQRYWGCPIPVVHCEDCGVVGVPAADLPVRLPEDVTFDVPGNPLDRHPDWKHVDCPKCGKPARRETDTLDTFVDSSWYYARFASVSDPEERAYWLPVDQYIGGVEHAVLHLLYSRFFSRAMRDVGELDLPSGEPFAGLFTQGMVTHETYRSEGGTWLEPSAVERKDGQVFEIATGKPVKVGAIEKMSKSKKNTVDPDAIVATYGADVARWFVLSDSPPERDVEWTQSGAEGAARFVQRVWSFVDSLPETGPFPAPGSDDVSTALRKSNHKAVAAIDRAIEEFRFNSAIATIHEWVNALKKTESDPATLGARAEGADMLARCLVPFMPHLAEACWERLGQTSLVSQAMWPKIDASLVVDDTVTLAVQVNGKRRAEITVAKDMAPDAVEAAAKALPDVASFIAGKSVKKTIVVPGRIVNIVVA.

The short motif at 45-55 is the 'HIGH' region element; that stretch reads PYPSGRLHMGH. Residues 619–623 carry the 'KMSKS' region motif; sequence KMSKS. Lys-622 contacts ATP.

Belongs to the class-I aminoacyl-tRNA synthetase family.

Its subcellular location is the cytoplasm. The catalysed reaction is tRNA(Leu) + L-leucine + ATP = L-leucyl-tRNA(Leu) + AMP + diphosphate. The sequence is that of Leucine--tRNA ligase from Hyphomonas neptunium (strain ATCC 15444).